The following is a 226-amino-acid chain: Myosin regulatory light chain 10 (226 aa).

EF-hand domains are found at residues 84–119 (NSPA…LGRI), 154–189 (DPEE…QADR), and 190–225 (FSEE…GEEK). Residues Asp-97, Asn-99, Asp-101, and Asp-108 each coordinate Ca(2+).

Myosin is a hexamer of 2 heavy chains and 4 light chains.

The polypeptide is Myosin regulatory light chain 10 (MYL10) (Homo sapiens (Human)).